A 125-amino-acid polypeptide reads, in one-letter code: Small ribosomal subunit protein bS6 (125 aa).

Positions 96 to 125 are disordered; the sequence is VTAPSPMMREEKAKSAPQPAEEAKETTLAT. Residues 116–125 are compositionally biased toward basic and acidic residues; sequence EEAKETTLAT.

Belongs to the bacterial ribosomal protein bS6 family.

Its function is as follows. Binds together with bS18 to 16S ribosomal RNA. This is Small ribosomal subunit protein bS6 from Nitrosospira multiformis (strain ATCC 25196 / NCIMB 11849 / C 71).